The primary structure comprises 513 residues: ATP synthase subunit alpha (513 aa).

169–176 (GDRQIGKT) is an ATP binding site.

The protein belongs to the ATPase alpha/beta chains family. In terms of assembly, F-type ATPases have 2 components, CF(1) - the catalytic core - and CF(0) - the membrane proton channel. CF(1) has five subunits: alpha(3), beta(3), gamma(1), delta(1), epsilon(1). CF(0) has three main subunits: a(1), b(2) and c(9-12). The alpha and beta chains form an alternating ring which encloses part of the gamma chain. CF(1) is attached to CF(0) by a central stalk formed by the gamma and epsilon chains, while a peripheral stalk is formed by the delta and b chains.

Its subcellular location is the cell inner membrane. The enzyme catalyses ATP + H2O + 4 H(+)(in) = ADP + phosphate + 5 H(+)(out). In terms of biological role, produces ATP from ADP in the presence of a proton gradient across the membrane. The alpha chain is a regulatory subunit. This is ATP synthase subunit alpha from Shewanella sediminis (strain HAW-EB3).